The following is a 496-amino-acid chain: Gasdermin-E (496 aa).

Positions 1 to 56 (MFAKATRNFLREVDADGDLIAVSNLNDSDKLQLLSLVTKKKRFWCWQRPKYQFLSL) are membrane targeting domain. Cys45 carries the S-(2-succinyl)cysteine modification. Lys120 is covalently cross-linked (Glycyl lysine isopeptide (Lys-Gly) (interchain with G-Cter in ubiquitin)). 3 positions are modified to S-(2-succinyl)cysteine: Cys156, Cys168, and Cys180. Residue Lys189 forms a Glycyl lysine isopeptide (Lys-Gly) (interchain with G-Cter in ubiquitin) linkage. S-(2-succinyl)cysteine occurs at positions 235, 371, 408, 417, and 489.

It belongs to the gasdermin family. In terms of assembly, homooligomer; homooligomeric ring-shaped pore complex containing 27-28 subunits when inserted in the membrane. Post-translationally, cleavage at Asp-270 by CASP3 (mature and uncleaved precursor forms) or granzyme B (GZMB) relieves autoinhibition and is sufficient to initiate pyroptosis. Succination by the Krebs cycle intermediate fumarate, which leads to S-(2-succinyl)cysteine residues, inhibits processing by caspases, and ability to initiate pyroptosis. Succination modification is catalyzed by a non-enzymatic reaction caused by an accumulation of fumarate. In terms of processing, ubiquitinated at Lys-120 and Lys-189 via 'Lys-48'-linked polyubiquitin chains, leading to proteasomal degradation. Deubiquitinated by USP48, leading to increased stability. Post-translationally, palmitoylated. As to expression, expressed in cochlea. Low level of expression in heart, brain, placenta, lung, liver, skeletal muscle, kidney and pancreas, with highest expression in placenta.

The protein resides in the cell membrane. It localises to the cytoplasm. Its subcellular location is the cytosol. Its activity is regulated as follows. The full-length protein before cleavage is inactive: intramolecular interactions between N- and C-terminal domains mediate autoinhibition in the absence of activation signal. The intrinsic pyroptosis-inducing activity is carried by the released N-terminal moiety (Gasdermin-E, N-terminal) following cleavage by CASP3 or granzyme B (GZMB). Activated by NLRP1 in the absence of GSDMD expression: NLRP1 cleaves and activates CASP8, promoting downstream activation of CASP3 and subsequent activation of GSDME. With respect to regulation, (Microbial infection) Activated upon human coronavirus SARS-CoV-2 infection, leading to lung epithelial cell death. Activation takes place in response to (1) activation of NLRP1 and (2) inactivation of GSDMD following NLRP1 and GSDMD cleavage by the SARS-CoV-2 3C-like proteinase nsp5. In terms of biological role, precursor of a pore-forming protein that converts non-inflammatory apoptosis to pyroptosis. This form constitutes the precursor of the pore-forming protein: upon cleavage, the released N-terminal moiety (Gasdermin-E, N-terminal) binds to membranes and forms pores, triggering pyroptosis. Pore-forming protein produced by cleavage by CASP3 or granzyme B (GZMB), which converts non-inflammatory apoptosis to pyroptosis or promotes granzyme-mediated pyroptosis, respectively. After cleavage, moves to the plasma membrane, homooligomerizes within the membrane and forms pores of 10-15 nanometers (nm) of inner diameter, allowing the release of mature interleukins (IL1B and IL16) and triggering pyroptosis. Binds to inner leaflet lipids, bisphosphorylated phosphatidylinositols, such as phosphatidylinositol (4,5)-bisphosphate. Cleavage by CASP3 switches CASP3-mediated apoptosis induced by TNF or danger signals, such as chemotherapy drugs, to pyroptosis. Mediates secondary necrosis downstream of the mitochondrial apoptotic pathway and CASP3 activation as well as in response to viral agents. Exhibits bactericidal activity. Cleavage by GZMB promotes tumor suppressor activity by triggering robust anti-tumor immunity. Suppresses tumors by mediating granzyme-mediated pyroptosis in target cells of natural killer (NK) cells: cleavage by granzyme B (GZMB), delivered to target cells from NK-cells, triggers pyroptosis of tumor cells and tumor suppression. May play a role in the p53/TP53-regulated cellular response to DNA damage. Its function is as follows. (Microbial infection) Pore-forming protein, which promotes maternal placental pyroptosis in response to Zika virus infection, contributing to adverse fetal outcomes. This chain is Gasdermin-E, found in Homo sapiens (Human).